The sequence spans 75 residues: Cruzioseptin-7 (75 aa).

The N-terminal stretch at 1–22 (MAKLKKSLFLVLFLGLVSLSIC) is a signal peptide. Residues 23–43 (EEEKREEENEEVQEDDDQSEE) constitute a propeptide that is removed on maturation. The segment at 25 to 44 (EKREEENEEVQEDDDQSEEK) is disordered. Acidic residues predominate over residues 30–41 (ENEEVQEDDDQS).

Expressed by the skin glands.

It is found in the secreted. Functionally, has antimicrobial activity. This Cruziohyla calcarifer (Splendid leaf frog) protein is Cruzioseptin-7.